The chain runs to 175 residues: Endoribonuclease YbeY (175 aa).

Zn(2+) contacts are provided by His137, His141, and His147.

Belongs to the endoribonuclease YbeY family. It depends on Zn(2+) as a cofactor.

It localises to the cytoplasm. Its function is as follows. Single strand-specific metallo-endoribonuclease involved in late-stage 70S ribosome quality control and in maturation of the 3' terminus of the 16S rRNA. This chain is Endoribonuclease YbeY, found in Burkholderia ambifaria (strain ATCC BAA-244 / DSM 16087 / CCUG 44356 / LMG 19182 / AMMD) (Burkholderia cepacia (strain AMMD)).